Reading from the N-terminus, the 269-residue chain is Holocytochrome-c synthase (269 aa).

A disordered region spans residues 1–72; that stretch reads MGWFWADQKT…ASKQPGQKMD (72 aa). HRM repeat units follow at residues 25 to 30 and 41 to 46; these read GCPVMH and ECPVMQ.

Belongs to the cytochrome c-type heme lyase family.

It is found in the mitochondrion inner membrane. It localises to the mitochondrion intermembrane space. It carries out the reaction holo-[cytochrome c] = apo-[cytochrome c] + heme b. Lyase that catalyzes the covalent linking of the heme group to the cytochrome C apoprotein to produce the mature functional cytochrome. This chain is Holocytochrome-c synthase (CYC3), found in Saccharomyces cerevisiae (strain ATCC 204508 / S288c) (Baker's yeast).